The sequence spans 383 residues: Probable arabinan endo-1,5-alpha-L-arabinosidase D (383 aa).

The signal sequence occupies residues 1–22 (MVHITLPGLLLCLCLYLSVAPA). D49 (proton acceptor) is an active-site residue. N75, N163, and N206 each carry an N-linked (GlcNAc...) asparagine glycan. The active-site Proton donor is the E227. Residue N325 is glycosylated (N-linked (GlcNAc...) asparagine). N356 carries the GPI-anchor amidated asparagine lipid modification. The propeptide at 357-383 (PGNSLQPPSSVSLQIVAFLCLVILFTL) is removed in mature form.

It belongs to the glycosyl hydrolase 43 family.

The protein resides in the cell membrane. The catalysed reaction is Endohydrolysis of (1-&gt;5)-alpha-arabinofuranosidic linkages in (1-&gt;5)-arabinans.. Its pathway is glycan metabolism; L-arabinan degradation. In terms of biological role, endo-1,5-alpha-L-arabinanase involved in degradation of pectin. Its preferred substrate is linear 1,5-alpha-L-arabinan. The sequence is that of Probable arabinan endo-1,5-alpha-L-arabinosidase D (abnD) from Emericella nidulans (strain FGSC A4 / ATCC 38163 / CBS 112.46 / NRRL 194 / M139) (Aspergillus nidulans).